The following is a 397-amino-acid chain: CCA-adding enzyme (397 aa).

The ATP site is built by G26 and R29. CTP is bound by residues G26 and R29. Residues D39 and D41 each contribute to the Mg(2+) site. Residues R110, D153, R156, R159, and R162 each coordinate ATP. The CTP site is built by R110, D153, R156, R159, and R162.

Belongs to the tRNA nucleotidyltransferase/poly(A) polymerase family. Bacterial CCA-adding enzyme type 3 subfamily. Homodimer. Requires Mg(2+) as cofactor.

The enzyme catalyses a tRNA precursor + 2 CTP + ATP = a tRNA with a 3' CCA end + 3 diphosphate. It carries out the reaction a tRNA with a 3' CCA end + 2 CTP + ATP = a tRNA with a 3' CCACCA end + 3 diphosphate. In terms of biological role, catalyzes the addition and repair of the essential 3'-terminal CCA sequence in tRNAs without using a nucleic acid template. Adds these three nucleotides in the order of C, C, and A to the tRNA nucleotide-73, using CTP and ATP as substrates and producing inorganic pyrophosphate. tRNA 3'-terminal CCA addition is required both for tRNA processing and repair. Also involved in tRNA surveillance by mediating tandem CCA addition to generate a CCACCA at the 3' terminus of unstable tRNAs. While stable tRNAs receive only 3'-terminal CCA, unstable tRNAs are marked with CCACCA and rapidly degraded. This chain is CCA-adding enzyme, found in Bacillus cereus (strain ATCC 10987 / NRS 248).